The chain runs to 1828 residues: AT-rich interactive domain-containing protein 2 (1828 aa).

The residue at position 2 (A2) is an N-acetylalanine. The residue at position 4 (S4) is a Phosphoserine. Glycyl lysine isopeptide (Lys-Gly) (interchain with G-Cter in SUMO2) cross-links involve residues K7, K15, and K119. In terms of domain architecture, ARID spans 13-105 (RRKGLAFLDE…YLEKYEKVHH (93 aa)). Positions 313-317 (LRFLL) match the LXXLL motif. Residues 524–603 (ACQWLNAHFE…IHVIGVKRRA (80 aa)) constitute a DNA-binding region (RFX-type winged-helix). K555 participates in a covalent cross-link: Glycyl lysine isopeptide (Lys-Gly) (interchain with G-Cter in SUMO2). 2 positions are modified to phosphoserine: S631 and S635. Position 653 is a phosphothreonine (T653). S689 bears the Phosphoserine mark. Position 692 is a phosphothreonine (T692). 6 disordered regions span residues 824–843 (TSPQ…SQPQ), 962–1028 (LTGQ…QVQV), 1245–1339 (KEAT…EPVD), 1360–1462 (KGDG…RPSV), 1483–1503 (HSGP…TNGT), and 1566–1618 (SAAQ…HADP). Residues 987-1011 (AMSSSSTLQSQGPPPTVSQMLSVKR) show a composition bias toward polar residues. Over residues 1012–1028 (QQQQQHSPAAPAQQVQV) the composition is skewed to low complexity. A compositionally biased stretch (basic and acidic residues) spans 1245–1259 (KEATGLHVHERKIEV). Residues 1267–1283 (RGTTNTSNGDTSESELQ) are compositionally biased toward polar residues. Position 1294 is a phosphoserine (S1294). Polar residues-rich tracts occupy residues 1295 to 1320 (DSSL…SNGP) and 1366 to 1379 (LSKN…SNHV). Position 1385 is a phosphoserine (S1385). Polar residues-rich tracts occupy residues 1390–1400 (QGTSGATQQDT) and 1419–1428 (GSPSTSSMQE). Low complexity predominate over residues 1453–1462 (SDVPQQRPSV). At S1491 the chain carries Phosphoserine. Composition is skewed to polar residues over residues 1491–1503 (SALS…TNGT) and 1567–1586 (AAQQ…APQN). The span at 1594–1614 (AVQVQGQPSSSQPSPVSASSQ) shows a compositional bias: low complexity. Residues 1626–1651 (FMCLWQSCKKWFQTPSQVFYHAATEH) form a C2H2-type zinc finger. Residues K1695, K1710, and K1725 each participate in a glycyl lysine isopeptide (Lys-Gly) (interchain with G-Cter in SUMO2) cross-link. The disordered stretch occupies residues 1697–1726 (DEPGQVANQKSSTKQPTVGGTGSAPRAQKA). The segment covering 1702-1714 (VANQKSSTKQPTV) has biased composition (polar residues).

This sequence belongs to the RFX family. As to quaternary structure, component of the SWI/SNF-B (PBAF) chromatin remodeling complex, at least composed of SMARCA4/BRG1, SMARCB1/BAF47/SNF5, ACTL6A/BAF53A or ACTL6B/BAF53B, SMARCE1/BAF57, SMARCD1/BAF60A, SMARCD2/BAF60B, perhaps SMARCD3/BAF60C, SMARCC1/BAF155, SMARCC2/BAF170, PBRM1/BAF180, ARID2/BAF200 and actin. Interacts with SRF. Forms complexes with SRF and SRF cofactors MYOCD, NKX2-5 and SRFBP1. In terms of tissue distribution, highly expressed in testis, expressed in heart, liver and kidney.

It localises to the nucleus. Its function is as follows. Involved in transcriptional activation and repression of select genes by chromatin remodeling (alteration of DNA-nucleosome topology). Required for the stability of the SWI/SNF chromatin remodeling complex SWI/SNF-B (PBAF). May be involved in targeting the complex to different genes. May be involved in regulating transcriptional activation of cardiac genes. This chain is AT-rich interactive domain-containing protein 2, found in Mus musculus (Mouse).